We begin with the raw amino-acid sequence, 472 residues long: MAGGEGGVTLGQPHLSRQDLATLDVTKLTPLSHEVISRQATINIGTIGHVAHGKSTVVKAISGVHTVRFKNELERNITIKLGYANAKIYKLDDPSCPRPECYRSCGSSTPDEFPTDIPGTKGNFKLVRHVSFVDCPGHDILMATMLNGAAVMDAALLLIAGNESCPQPQTSEHLAAIEIMKLKHILILQNKIDLVKESQAKEQYEQILAFVQGTVAEGAPIIPISAQLKYNIEVVCEYIVKKIPVPPRDFTSEPRLIVIRSFDVNKPGCEVDDLKGGVAGGSILKGVLKVGQEIEVRPGIVSKDSEGKLMCKPIFSKIVSLFAEHNDLQYAAPGGLIGVGTKIDPTLCRADRMVGQVLGAVGALPEIFTELEISYFLLRRLLGVRTEGDKKAAKVQKLSKNEVLMVNIGSLSTGGRVSAVKADLGKIVLTNPVCTEVGEKIALSRRVEKHWRLIGWGQIRRGVTIKPTVDDD.

Ala2 bears the N-acetylalanine mark. Ser16 is modified (phosphoserine). In terms of domain architecture, tr-type G spans 39–248 (QATINIGTIG…IVKKIPVPPR (210 aa)). Residues 48–55 (GHVAHGKS) are G1. 51-56 (AHGKST) provides a ligand contact to GTP. The interval 76 to 80 (NITIK) is G2. The G3 stretch occupies residues 134–137 (DCPG). GTP contacts are provided by residues 190-193 (NKID) and 225-227 (SAQ). The interval 190 to 193 (NKID) is G4. A G5 region spans residues 225 to 227 (SAQ). The interval 457 to 469 (GQIRRGVTIKPTV) is interacts with Cdc123.

Belongs to the TRAFAC class translation factor GTPase superfamily. Classic translation factor GTPase family. EIF2G subfamily. In terms of assembly, eukaryotic translation initiation factor 2 eIF2 is a heterotrimeric complex composed of an alpha (EIF2S1), a beta (EIF2S2) and a gamma (EIF2S3) chain. eIF2 is member of the 43S pre-initiation complex (43S PIC). Interacts (via C-terminus) with CDC123; the interaction is direct. In terms of tissue distribution, widely expressed. In the brain, high mRNA levels are observed in specific regions, including the habenula, anterodorsal thalamic nucleus, hippocampus, hypothalamus, and cerebellum. Also expressed in the embryonic brain. There is a differential expression between males and females, which is tissue-specific. Females tend to have higher expression levels than males in the brain (cortex, hippocampus and paraventricular nucleus, but not in the habenula), as well as in other tissues. The up-regulation observed in females at the mRNA level may be due to the presence of 2 active copies of the gene.

It is found in the cytoplasm. The protein resides in the cytosol. The catalysed reaction is GTP + H2O = GDP + phosphate + H(+). Functionally, member of the eIF2 complex that functions in the early steps of protein synthesis by forming a ternary complex with GTP and initiator tRNA. This complex binds to a 40S ribosomal subunit, followed by mRNA binding to form the 43S pre-initiation complex (43S PIC). Junction of the 60S ribosomal subunit to form the 80S initiation complex is preceded by hydrolysis of the GTP bound to eIF2 and release of an eIF2-GDP binary complex. In order for eIF2 to recycle and catalyze another round of initiation, the GDP bound to eIF2 must exchange with GTP by way of a reaction catalyzed by eIF-2B. Along with its paralog on chromosome Y, may contribute to spermatogenesis up to the round spermatid stage. The sequence is that of Eukaryotic translation initiation factor 2 subunit 3, X-linked (Eif2s3x) from Mus musculus (Mouse).